Here is a 388-residue protein sequence, read N- to C-terminus: Dual-specificity RNA methyltransferase RlmN (388 aa).

E109 acts as the Proton acceptor in catalysis. Positions E115–D354 constitute a Radical SAM core domain. A disulfide bond links C122 and C359. The [4Fe-4S] cluster site is built by C129, C133, and C136. S-adenosyl-L-methionine is bound by residues G183–E184, S215, S237–H239, and N316. C359 acts as the S-methylcysteine intermediate in catalysis.

This sequence belongs to the radical SAM superfamily. RlmN family. [4Fe-4S] cluster serves as cofactor.

It localises to the cytoplasm. It catalyses the reaction adenosine(2503) in 23S rRNA + 2 reduced [2Fe-2S]-[ferredoxin] + 2 S-adenosyl-L-methionine = 2-methyladenosine(2503) in 23S rRNA + 5'-deoxyadenosine + L-methionine + 2 oxidized [2Fe-2S]-[ferredoxin] + S-adenosyl-L-homocysteine. The catalysed reaction is adenosine(37) in tRNA + 2 reduced [2Fe-2S]-[ferredoxin] + 2 S-adenosyl-L-methionine = 2-methyladenosine(37) in tRNA + 5'-deoxyadenosine + L-methionine + 2 oxidized [2Fe-2S]-[ferredoxin] + S-adenosyl-L-homocysteine. Functionally, specifically methylates position 2 of adenine 2503 in 23S rRNA and position 2 of adenine 37 in tRNAs. m2A2503 modification seems to play a crucial role in the proofreading step occurring at the peptidyl transferase center and thus would serve to optimize ribosomal fidelity. The sequence is that of Dual-specificity RNA methyltransferase RlmN from Salmonella typhi.